A 75-amino-acid chain; its full sequence is Small ribosomal subunit protein bS16 (75 aa).

This sequence belongs to the bacterial ribosomal protein bS16 family.

The polypeptide is Small ribosomal subunit protein bS16 (Nitratiruptor sp. (strain SB155-2)).